A 105-amino-acid chain; its full sequence is Large ribosomal subunit protein bL21 (105 aa).

The protein belongs to the bacterial ribosomal protein bL21 family. In terms of assembly, part of the 50S ribosomal subunit. Contacts protein L20.

In terms of biological role, this protein binds to 23S rRNA in the presence of protein L20. In Natranaerobius thermophilus (strain ATCC BAA-1301 / DSM 18059 / JW/NM-WN-LF), this protein is Large ribosomal subunit protein bL21.